Consider the following 149-residue polypeptide: Large ribosomal subunit protein bL9 (149 aa).

This sequence belongs to the bacterial ribosomal protein bL9 family.

In terms of biological role, binds to the 23S rRNA. This Klebsiella pneumoniae (strain 342) protein is Large ribosomal subunit protein bL9.